The primary structure comprises 82 residues: Endocuticle structural glycoprotein ABD-5 (82 aa).

Pyrrolidone carboxylic acid is present on Q1. Residues 18-82 (LGQYNFAYRT…ENGYQPRVQS (65 aa)) form the Chitin-binding type R&amp;R domain.

Its function is as follows. Component of the soft endocuticle of migratory locust. The sequence is that of Endocuticle structural glycoprotein ABD-5 from Locusta migratoria (Migratory locust).